Consider the following 68-residue polypeptide: MTNEEKLIAEIDSAGLSAEMLESMPSPEMFPLIIVNLQGRIAELEARETEMLARVDTLIARLAHLGVA.

Positions 34 to 63 (IVNLQGRIAELEARETEMLARVDTLIARLA) form a coiled coil.

Assembly protein. The polypeptide is Protein P33 (XXXIII) (Acinetobacter calcoaceticus (Arthrobacter siderocapsulatus)).